Consider the following 424-residue polypeptide: Tubby protein homolog 1 (424 aa).

A disordered region spans residues 19–47; sequence MLEDKQKQKRHQSAGSVRTTTTTSSMSMN. Over residues 37 to 47 the composition is skewed to low complexity; it reads TTTTTSSMSMN.

This sequence belongs to the TUB family. As to quaternary structure, interacts with rgb-3.

Its subcellular location is the cytoplasm. The protein localises to the cell projection. It localises to the axon. It is found in the dendrite. The protein resides in the cilium. Has a role in fat regulation independent of daf-16. Implicated in ciliar sensory function which is required for normal sensory behavior such as chemotaxis. Functions in life span control via the insulin/IGF-1 pathway. Thought to be involved in neuronal trafficking. In Caenorhabditis briggsae, this protein is Tubby protein homolog 1.